The primary structure comprises 129 residues: Phosphoribosyl-AMP cyclohydrolase (129 aa).

Residue Asp76 participates in Mg(2+) binding. Residue Cys77 coordinates Zn(2+). Residues Asp78 and Asp80 each contribute to the Mg(2+) site. Zn(2+) is bound by residues Cys97 and Cys104.

It belongs to the PRA-CH family. Homodimer. Requires Mg(2+) as cofactor. The cofactor is Zn(2+).

It is found in the cytoplasm. It carries out the reaction 1-(5-phospho-beta-D-ribosyl)-5'-AMP + H2O = 1-(5-phospho-beta-D-ribosyl)-5-[(5-phospho-beta-D-ribosylamino)methylideneamino]imidazole-4-carboxamide. It participates in amino-acid biosynthesis; L-histidine biosynthesis; L-histidine from 5-phospho-alpha-D-ribose 1-diphosphate: step 3/9. In terms of biological role, catalyzes the hydrolysis of the adenine ring of phosphoribosyl-AMP. The sequence is that of Phosphoribosyl-AMP cyclohydrolase from Albidiferax ferrireducens (strain ATCC BAA-621 / DSM 15236 / T118) (Rhodoferax ferrireducens).